We begin with the raw amino-acid sequence, 70 residues long: uncharacterized protein (70 aa).

The helical transmembrane segment at I15–V37 threads the bilayer.

The protein resides in the membrane. This is an uncharacterized protein from Dictyostelium discoideum (Social amoeba).